The sequence spans 590 residues: Leukocyte immunoglobulin-like receptor subfamily B member 5 (590 aa).

Residues Met1–Ala23 form the signal peptide. The Extracellular portion of the chain corresponds to Gly24–Gly458. Ig-like C2-type domains lie at Pro27 to Val116, Asp111 to Ile228, Pro224 to Asp313, and Gly337 to Ser418. Cys49 and Cys98 are joined by a disulfide. Asn139 is a glycosylation site (N-linked (GlcNAc...) asparagine). Disulfide bonds link Cys144–Cys195 and Cys244–Cys295. Residues Asn279 and Asn339 are each glycosylated (N-linked (GlcNAc...) asparagine). A disulfide bridge links Cys344 with Cys395. A compositionally biased stretch (low complexity) spans Val416–Pro433. A disordered region spans residues Val416–Pro449. Residues Val459 to Leu479 form a helical membrane-spanning segment. Residues Arg480–His590 are Cytoplasmic-facing. Disordered regions lie at residues Arg488–Ser514 and Lys529–Gln550. A Phosphoserine modification is found at Ser514. The ITIM motif 1 signature appears at Val552–Leu557. Over residues Leu562 to Pro578 the composition is skewed to basic and acidic residues. The disordered stretch occupies residues Leu562–His590. The short motif at Ser582 to Leu587 is the ITIM motif 2 element.

Detected in a natural killer (NK) cells.

Its subcellular location is the membrane. In terms of biological role, may act as receptor for class I MHC antigens. The polypeptide is Leukocyte immunoglobulin-like receptor subfamily B member 5 (LILRB5) (Homo sapiens (Human)).